We begin with the raw amino-acid sequence, 339 residues long: Ribosomal RNA small subunit methyltransferase H (339 aa).

S-adenosyl-L-methionine is bound by residues glycine 40 to tyrosine 42, aspartate 58, phenylalanine 85, aspartate 106, and glutamine 113.

It belongs to the methyltransferase superfamily. RsmH family.

It is found in the cytoplasm. The enzyme catalyses cytidine(1402) in 16S rRNA + S-adenosyl-L-methionine = N(4)-methylcytidine(1402) in 16S rRNA + S-adenosyl-L-homocysteine + H(+). Its function is as follows. Specifically methylates the N4 position of cytidine in position 1402 (C1402) of 16S rRNA. The polypeptide is Ribosomal RNA small subunit methyltransferase H (Parvibaculum lavamentivorans (strain DS-1 / DSM 13023 / NCIMB 13966)).